Consider the following 5005-residue polypeptide: Bridge-like lipid transfer protein family member 1 (5005 aa).

A helical transmembrane segment spans residues 27–47 (VVWLLVATILSCGWIIYLTYY). Disordered stretches follow at residues 692-718 (RPAQ…PSEL) and 1205-1314 (KSVG…ASVC). A compositionally biased stretch (pro residues) spans 708–718 (SPRPPVDPSEL). Positions 1205-1215 (KSVGIEGERKT) are enriched in basic and acidic residues. Over residues 1226 to 1240 (SHSSSSSSEENSSSS) the composition is skewed to low complexity. Over residues 1248–1275 (GEKESPSSAADDHSVQKDLLHSARRDDG) the composition is skewed to basic and acidic residues. Over residues 1278–1303 (SVPTEISGTSPVSPNTQDKSVGQSPL) the composition is skewed to polar residues. 3 positions are modified to phosphoserine: Ser1301, Ser1305, and Ser1323. The residue at position 1325 (Thr1325) is a Phosphothreonine. Disordered stretches follow at residues 1343-1376 (SDVS…SNSF), 1399-1425 (EEFE…QMQQ), 1521-1544 (TNKR…SEES), and 1676-1698 (FSEN…MIGT). Phosphoserine occurs at positions 1355 and 1406. The span at 1521–1530 (TNKRTSKSSL) shows a compositional bias: basic residues. The span at 1684–1693 (QDIRGTKTEH) shows a compositional bias: basic and acidic residues. Phosphoserine occurs at positions 1805 and 1808. Disordered regions lie at residues 1927 to 1991 (RGGV…PLMP), 2165 to 2192 (PAQP…GGLQ), 2265 to 2288 (TSGD…KESP), 2367 to 2387 (ESPV…PNLP), 2400 to 2420 (SSDQ…QDDV), and 2598 to 2677 (TAGS…KDVV). Polar residues-rich tracts occupy residues 1931–1948 (LTSN…YNTD) and 1959–1971 (TSPS…NSVS). Composition is skewed to polar residues over residues 2367-2379 (ESPV…NSLP), 2400-2418 (SSDQ…TSQD), and 2598-2608 (TAGSASPTPTF). A phosphoserine mark is found at Ser2601 and Ser2603. Over residues 2619–2638 (SDFSRSSRGSLNGGNRVNNA) the composition is skewed to low complexity. Residues 2643-2665 (ANNENNKKESRNKNSLGRSERRT) are compositionally biased toward basic and acidic residues. A Phosphoserine modification is found at Ser2755. The segment at 2928 to 2967 (RQPSTAPQPMKEDIATPLPSEKTPTSVNQTPIETNEFPQL) is disordered. Over residues 2949 to 2964 (KTPTSVNQTPIETNEF) the composition is skewed to polar residues. 3 positions are modified to phosphoserine: Ser3562, Glu3577, and Ser3653. Disordered stretches follow at residues 3614 to 3662 (YSRS…TFNI), 3686 to 3744 (SSNS…ERFY), 3821 to 3843 (RRSY…KKFQ), 3935 to 3954 (KTNT…KGKG), 4089 to 4145 (TTYP…SSSS), and 4325 to 4396 (QSAS…ASQQ). Polar residues predominate over residues 3686 to 3711 (SSNSEGSCSVFSSPKTTGGFSPSVPF). A compositionally biased stretch (acidic residues) spans 3727-3736 (EDSEKDEKDE). Positions 3821–3837 (RRSYDRSSRSLDQDSPS) are enriched in basic and acidic residues. Residues 4097 to 4112 (SPGSNAPQTGAKTSAS) show a composition bias toward polar residues. Over residues 4117–4145 (PGSSGLGSPLGRSRHSSSQSDLTGSSSSS) the composition is skewed to low complexity. Ser4124 carries the post-translational modification Phosphoserine. Residues 4325 to 4358 (QSASFTHMPQSPNVFNEHMTNNTMSPGTAAQSLK) are compositionally biased toward polar residues. Residues 4359–4372 (SPASIRSRSVSDSS) show a composition bias toward low complexity. Residues 4381–4396 (KTSTPVNKSNKAASQQ) show a composition bias toward polar residues.

Highly expressed in testis and ovary. Weakly or not expressed in other tissues.

It localises to the cell membrane. The protein resides in the endoplasmic reticulum membrane. Its subcellular location is the mitochondrion membrane. Functionally, tube-forming lipid transport protein which provides phosphatidylethanolamine for glycosylphosphatidylinositol (GPI) anchor synthesis in the endoplasmic reticulum. Plays a role in endosomal trafficking and endosome recycling. Also involved in the actin cytoskeleton and cilia structural dynamics. Acts as a regulator of phagocytosis. The sequence is that of Bridge-like lipid transfer protein family member 1 (Bltp1) from Mus musculus (Mouse).